The chain runs to 144 residues: Large ribosomal subunit protein uL16 (144 aa).

The protein belongs to the universal ribosomal protein uL16 family. Part of the 50S ribosomal subunit.

Binds 23S rRNA and is also seen to make contacts with the A and possibly P site tRNAs. The sequence is that of Large ribosomal subunit protein uL16 from Bacillus mycoides (strain KBAB4) (Bacillus weihenstephanensis).